The chain runs to 81 residues: Small ribosomal subunit protein bS16 (81 aa).

The protein belongs to the bacterial ribosomal protein bS16 family.

The sequence is that of Small ribosomal subunit protein bS16 from Neisseria meningitidis serogroup C (strain 053442).